Reading from the N-terminus, the 242-residue chain is Biosynthetic peptidoglycan transglycosylase (242 aa).

A helical membrane pass occupies residues 12–31 (LLFWLMLASALLVLALRWLP).

This sequence belongs to the glycosyltransferase 51 family.

The protein resides in the cell inner membrane. The enzyme catalyses [GlcNAc-(1-&gt;4)-Mur2Ac(oyl-L-Ala-gamma-D-Glu-L-Lys-D-Ala-D-Ala)](n)-di-trans,octa-cis-undecaprenyl diphosphate + beta-D-GlcNAc-(1-&gt;4)-Mur2Ac(oyl-L-Ala-gamma-D-Glu-L-Lys-D-Ala-D-Ala)-di-trans,octa-cis-undecaprenyl diphosphate = [GlcNAc-(1-&gt;4)-Mur2Ac(oyl-L-Ala-gamma-D-Glu-L-Lys-D-Ala-D-Ala)](n+1)-di-trans,octa-cis-undecaprenyl diphosphate + di-trans,octa-cis-undecaprenyl diphosphate + H(+). Its pathway is cell wall biogenesis; peptidoglycan biosynthesis. Peptidoglycan polymerase that catalyzes glycan chain elongation from lipid-linked precursors. This chain is Biosynthetic peptidoglycan transglycosylase, found in Ectopseudomonas mendocina (strain ymp) (Pseudomonas mendocina).